The following is a 225-amino-acid chain: Leucyl/phenylalanyl-tRNA--protein transferase (225 aa).

Belongs to the L/F-transferase family.

It localises to the cytoplasm. It carries out the reaction N-terminal L-lysyl-[protein] + L-leucyl-tRNA(Leu) = N-terminal L-leucyl-L-lysyl-[protein] + tRNA(Leu) + H(+). The enzyme catalyses N-terminal L-arginyl-[protein] + L-leucyl-tRNA(Leu) = N-terminal L-leucyl-L-arginyl-[protein] + tRNA(Leu) + H(+). It catalyses the reaction L-phenylalanyl-tRNA(Phe) + an N-terminal L-alpha-aminoacyl-[protein] = an N-terminal L-phenylalanyl-L-alpha-aminoacyl-[protein] + tRNA(Phe). In terms of biological role, functions in the N-end rule pathway of protein degradation where it conjugates Leu, Phe and, less efficiently, Met from aminoacyl-tRNAs to the N-termini of proteins containing an N-terminal arginine or lysine. The sequence is that of Leucyl/phenylalanyl-tRNA--protein transferase from Nitrobacter hamburgensis (strain DSM 10229 / NCIMB 13809 / X14).